The sequence spans 296 residues: Protoheme IX farnesyltransferase (296 aa).

Helical transmembrane passes span 29–49 (LSGL…GHVA), 54–74 (ALTV…NCWM), 98–118 (FTAL…LALV), 121–141 (PLTA…YTPM), 147–167 (LALL…WTAA), 175–195 (GLAL…AVSI), 221–241 (WIAA…PLRV), 246–266 (YGAV…AGVG), and 275–295 (NFFL…FLGA).

Belongs to the UbiA prenyltransferase family. Protoheme IX farnesyltransferase subfamily.

The protein localises to the cell inner membrane. It catalyses the reaction heme b + (2E,6E)-farnesyl diphosphate + H2O = Fe(II)-heme o + diphosphate. It functions in the pathway porphyrin-containing compound metabolism; heme O biosynthesis; heme O from protoheme: step 1/1. Its function is as follows. Converts heme B (protoheme IX) to heme O by substitution of the vinyl group on carbon 2 of heme B porphyrin ring with a hydroxyethyl farnesyl side group. The chain is Protoheme IX farnesyltransferase from Anaeromyxobacter sp. (strain Fw109-5).